Here is a 129-residue protein sequence, read N- to C-terminus: Trefoil factor 2 (129 aa).

The signal sequence occupies residues 1 to 23 (MGRRDAQLLAALLVLGLCALAGS). 2 P-type domains span residues 29 to 73 (CQCS…FHPL) and 79 to 122 (DQCV…FFPK). Intrachain disulfides connect cysteine 29-cysteine 127, cysteine 31-cysteine 58, cysteine 42-cysteine 57, cysteine 52-cysteine 69, cysteine 81-cysteine 107, cysteine 91-cysteine 106, and cysteine 101-cysteine 118.

Stomach.

It is found in the secreted. Its function is as follows. Inhibits gastrointestinal motility and gastric acid secretion. Could function as a structural component of gastric mucus, possibly by stabilizing glycoproteins in the mucus gel through interactions with carbohydrate side chains. This is Trefoil factor 2 (TFF2) from Homo sapiens (Human).